A 202-amino-acid chain; its full sequence is Small ribosomal subunit protein uS4c (202 aa).

The segment at 18-45 is disordered; it reads LPGLTRKMAKRKSPPGQHGAASKKPSQY. Positions 90 to 152 constitute an S4 RNA-binding domain; that stretch reads MRLDTTIFRL…SRSRKLIEGY (63 aa).

The protein belongs to the universal ribosomal protein uS4 family. Part of the 30S ribosomal subunit. Contacts protein S5. The interaction surface between S4 and S5 is involved in control of translational fidelity.

The protein localises to the plastid. The protein resides in the chloroplast. Functionally, one of the primary rRNA binding proteins, it binds directly to 16S rRNA where it nucleates assembly of the body of the 30S subunit. Its function is as follows. With S5 and S12 plays an important role in translational accuracy. The sequence is that of Small ribosomal subunit protein uS4c (rps4) from Nephroselmis olivacea (Green alga).